Here is a 160-residue protein sequence, read N- to C-terminus: Regulatory protein RecX (160 aa).

This sequence belongs to the RecX family.

The protein localises to the cytoplasm. Functionally, modulates RecA activity. The polypeptide is Regulatory protein RecX (Pelodictyon phaeoclathratiforme (strain DSM 5477 / BU-1)).